Consider the following 253-residue polypeptide: 5'-nucleotidase SurE (253 aa).

The a divalent metal cation site is built by Asp-8, Asp-9, Ser-39, and Asn-92.

Belongs to the SurE nucleotidase family. The cofactor is a divalent metal cation.

It is found in the cytoplasm. The catalysed reaction is a ribonucleoside 5'-phosphate + H2O = a ribonucleoside + phosphate. Its function is as follows. Nucleotidase that shows phosphatase activity on nucleoside 5'-monophosphates. This chain is 5'-nucleotidase SurE, found in Burkholderia vietnamiensis (strain G4 / LMG 22486) (Burkholderia cepacia (strain R1808)).